We begin with the raw amino-acid sequence, 395 residues long: Zinc finger protein 385D (395 aa).

Matrin-type zinc fingers lie at residues 80–110 (ISCN…KLKA), 204–234 (LYCS…MLEA), and 267–297 (FHCE…RASG). Positions 282–308 (LKQHISSRRHKDRASGKPPKPKYSPYN) are disordered.

The protein localises to the nucleus. This chain is Zinc finger protein 385D (Znf385d), found in Rattus norvegicus (Rat).